Consider the following 91-residue polypeptide: PqqA binding protein (91 aa).

It belongs to the PqqD family. Monomer. Interacts with PqqE.

Its pathway is cofactor biosynthesis; pyrroloquinoline quinone biosynthesis. Functions as a PqqA binding protein and presents PqqA to PqqE, in the pyrroloquinoline quinone (PQQ) biosynthetic pathway. This is PqqA binding protein from Pseudomonas entomophila (strain L48).